The sequence spans 239 residues: Putative 3-methyladenine DNA glycosylase (239 aa).

Belongs to the DNA glycosylase MPG family.

The protein is Putative 3-methyladenine DNA glycosylase of Pseudomonas aeruginosa (strain ATCC 15692 / DSM 22644 / CIP 104116 / JCM 14847 / LMG 12228 / 1C / PRS 101 / PAO1).